The chain runs to 127 residues: Large ribosomal subunit protein uL22 (127 aa).

This sequence belongs to the universal ribosomal protein uL22 family. Part of the 50S ribosomal subunit.

Its function is as follows. This protein binds specifically to 23S rRNA; its binding is stimulated by other ribosomal proteins, e.g. L4, L17, and L20. It is important during the early stages of 50S assembly. It makes multiple contacts with different domains of the 23S rRNA in the assembled 50S subunit and ribosome. The globular domain of the protein is located near the polypeptide exit tunnel on the outside of the subunit, while an extended beta-hairpin is found that lines the wall of the exit tunnel in the center of the 70S ribosome. The polypeptide is Large ribosomal subunit protein uL22 (Methylorubrum extorquens (strain CM4 / NCIMB 13688) (Methylobacterium extorquens)).